Reading from the N-terminus, the 230-residue chain is 5'-methylthioadenosine/S-adenosylhomocysteine nucleosidase (230 aa).

Glu-12 acts as the Proton acceptor in catalysis. Substrate contacts are provided by residues Gly-78, Ile-153, and 174–175 (ME). Catalysis depends on Asp-198, which acts as the Proton donor.

It belongs to the PNP/UDP phosphorylase family. MtnN subfamily.

It catalyses the reaction S-adenosyl-L-homocysteine + H2O = S-(5-deoxy-D-ribos-5-yl)-L-homocysteine + adenine. The enzyme catalyses S-methyl-5'-thioadenosine + H2O = 5-(methylsulfanyl)-D-ribose + adenine. It carries out the reaction 5'-deoxyadenosine + H2O = 5-deoxy-D-ribose + adenine. Its pathway is amino-acid biosynthesis; L-methionine biosynthesis via salvage pathway; S-methyl-5-thio-alpha-D-ribose 1-phosphate from S-methyl-5'-thioadenosine (hydrolase route): step 1/2. Catalyzes the irreversible cleavage of the glycosidic bond in both 5'-methylthioadenosine (MTA) and S-adenosylhomocysteine (SAH/AdoHcy) to adenine and the corresponding thioribose, 5'-methylthioribose and S-ribosylhomocysteine, respectively. Also cleaves 5'-deoxyadenosine, a toxic by-product of radical S-adenosylmethionine (SAM) enzymes, into 5-deoxyribose and adenine. In Shewanella loihica (strain ATCC BAA-1088 / PV-4), this protein is 5'-methylthioadenosine/S-adenosylhomocysteine nucleosidase.